The primary structure comprises 364 residues: Methylthioribose-1-phosphate isomerase (364 aa).

D254 acts as the Proton donor in catalysis.

Belongs to the eIF-2B alpha/beta/delta subunits family. MtnA subfamily.

It is found in the cytoplasm. It localises to the nucleus. It catalyses the reaction 5-(methylsulfanyl)-alpha-D-ribose 1-phosphate = 5-(methylsulfanyl)-D-ribulose 1-phosphate. It participates in amino-acid biosynthesis; L-methionine biosynthesis via salvage pathway; L-methionine from S-methyl-5-thio-alpha-D-ribose 1-phosphate: step 1/6. Catalyzes the interconversion of methylthioribose-1-phosphate (MTR-1-P) into methylthioribulose-1-phosphate (MTRu-1-P). The sequence is that of Methylthioribose-1-phosphate isomerase from Drosophila erecta (Fruit fly).